A 122-amino-acid chain; its full sequence is Dihydroneopterin aldolase (122 aa).

Residues E21, Y53, and 72 to 73 (VE) each bind substrate. The active-site Proton donor/acceptor is K98.

Belongs to the DHNA family. In terms of assembly, homooctamer.

It carries out the reaction 7,8-dihydroneopterin = 6-hydroxymethyl-7,8-dihydropterin + glycolaldehyde. The catalysed reaction is 7,8-dihydroneopterin = 7,8-dihydromonapterin. Its pathway is cofactor biosynthesis; tetrahydrofolate biosynthesis; 2-amino-4-hydroxy-6-hydroxymethyl-7,8-dihydropteridine diphosphate from 7,8-dihydroneopterin triphosphate: step 3/4. Catalyzes the conversion of 7,8-dihydroneopterin to 6-hydroxymethyl-7,8-dihydropterin. Can use L-threo-dihydroneopterin and D-erythro-dihydroneopterin as substrates for the formation of 6-hydroxymethyldihydropterin, but it can also catalyze the epimerization of carbon 2' of dihydroneopterin to dihydromonapterin at appreciable velocity. The sequence is that of Dihydroneopterin aldolase (folB) from Escherichia coli O6:H1 (strain CFT073 / ATCC 700928 / UPEC).